A 67-amino-acid chain; its full sequence is Small ribosomal subunit protein bS21 (67 aa).

This sequence belongs to the bacterial ribosomal protein bS21 family.

The chain is Small ribosomal subunit protein bS21 from Hydrogenobaculum sp. (strain Y04AAS1).